The primary structure comprises 127 residues: Protein translocase subunit SecE (127 aa).

The next 3 helical transmembrane spans lie at Ala16–Tyr36, Leu41–Leu61, and Ile96–Val116.

The protein belongs to the SecE/SEC61-gamma family. Component of the Sec protein translocase complex. Heterotrimer consisting of SecY, SecE and SecG subunits. The heterotrimers can form oligomers, although 1 heterotrimer is thought to be able to translocate proteins. Interacts with the ribosome. Interacts with SecDF, and other proteins may be involved. Interacts with SecA.

The protein localises to the cell inner membrane. In terms of biological role, essential subunit of the Sec protein translocation channel SecYEG. Clamps together the 2 halves of SecY. May contact the channel plug during translocation. This Salmonella typhi protein is Protein translocase subunit SecE.